Consider the following 129-residue polypeptide: Large ribosomal subunit protein bL20 (129 aa).

The protein belongs to the bacterial ribosomal protein bL20 family.

Binds directly to 23S ribosomal RNA and is necessary for the in vitro assembly process of the 50S ribosomal subunit. It is not involved in the protein synthesizing functions of that subunit. The polypeptide is Large ribosomal subunit protein bL20 (Kineococcus radiotolerans (strain ATCC BAA-149 / DSM 14245 / SRS30216)).